Consider the following 493-residue polypeptide: Probable malate:quinone oxidoreductase (493 aa).

It belongs to the MQO family. The cofactor is FAD.

The catalysed reaction is (S)-malate + a quinone = a quinol + oxaloacetate. The protein operates within carbohydrate metabolism; tricarboxylic acid cycle; oxaloacetate from (S)-malate (quinone route): step 1/1. This chain is Probable malate:quinone oxidoreductase, found in Lysinibacillus sphaericus (strain C3-41).